A 500-amino-acid chain; its full sequence is Perfringolysin O (500 aa).

The signal sequence occupies residues 1 to 28 (MIRFKKTKLIASIAMALCLFSQPVISFS). The next 4 beta stranded transmembrane spans lie at 189–202 (KSQISSALNVNAKV), 209–218 (VDFNAVANNE), 287–296 (SKDVQAAFKA), and 304–316 (KNSQQYKDIYENS). Positions 458 to 468 (ECTGLAWEWWR) match the Conserved undecapeptide motif. The Cholesterol binding signature appears at 490 to 491 (TL).

This sequence belongs to the cholesterol-dependent cytolysin family. Homooligomeric pore complex of 35 to 50 subunits; when inserted in the host membrane.

The protein localises to the secreted. It is found in the host cell membrane. Its function is as follows. A cholesterol-dependent toxin that causes cytolysis by forming pores in cholesterol containing host membranes. After binding to target membranes, the protein assembles into a pre-pore complex. A conformation change leads to insertion in the host membrane and formation of an oligomeric pore complex. Cholesterol is required for binding to host cell membranes, membrane insertion and pore formation; cholesterol binding is mediated by a Thr-Leu pair in the C-terminus. Can be reversibly inactivated by oxidation. In Clostridium perfringens (strain ATCC 13124 / DSM 756 / JCM 1290 / NCIMB 6125 / NCTC 8237 / Type A), this protein is Perfringolysin O (pfo).